The primary structure comprises 404 residues: Interferon-activable protein 205-A (404 aa).

Positions methionine 1–glutamate 88 constitute a Pyrin domain. A disordered region spans residues glutamate 85–proline 198. 2 stretches are compositionally biased toward low complexity: residues alanine 102–serine 112 and threonine 122–alanine 132. Over residues glycine 137–lysine 147 the composition is skewed to basic and acidic residues. Over residues glutamine 168–alanine 185 the composition is skewed to low complexity. Residues lysine 186–isoleucine 197 are compositionally biased toward polar residues. In terms of domain architecture, HIN-200 spans proline 192–threonine 392.

This sequence belongs to the HIN-200 family.

Its subcellular location is the nucleus. May act as a transcriptional regulator in the myeloid lineage. Inhibits cell growth via p53/TP53 and RB1-dependent and independent pathways. This Mus musculus (Mouse) protein is Interferon-activable protein 205-A (Ifi205a).